The primary structure comprises 526 residues: Bifunctional purine biosynthesis protein PurH (526 aa).

The region spanning 1–145 (MIRTALLSVS…KNHQDVTVLI (145 aa)) is the MGS-like domain.

This sequence belongs to the PurH family.

The enzyme catalyses (6R)-10-formyltetrahydrofolate + 5-amino-1-(5-phospho-beta-D-ribosyl)imidazole-4-carboxamide = 5-formamido-1-(5-phospho-D-ribosyl)imidazole-4-carboxamide + (6S)-5,6,7,8-tetrahydrofolate. It carries out the reaction IMP + H2O = 5-formamido-1-(5-phospho-D-ribosyl)imidazole-4-carboxamide. Its pathway is purine metabolism; IMP biosynthesis via de novo pathway; 5-formamido-1-(5-phospho-D-ribosyl)imidazole-4-carboxamide from 5-amino-1-(5-phospho-D-ribosyl)imidazole-4-carboxamide (10-formyl THF route): step 1/1. It functions in the pathway purine metabolism; IMP biosynthesis via de novo pathway; IMP from 5-formamido-1-(5-phospho-D-ribosyl)imidazole-4-carboxamide: step 1/1. The protein is Bifunctional purine biosynthesis protein PurH of Polynucleobacter asymbioticus (strain DSM 18221 / CIP 109841 / QLW-P1DMWA-1) (Polynucleobacter necessarius subsp. asymbioticus).